The primary structure comprises 174 residues: uncharacterized protein (174 aa).

The chain crosses the membrane as a helical span at residues 7 to 24 (LLLLAFAVCLAVGFSGCL).

It localises to the membrane. This is an uncharacterized protein from Methanocaldococcus jannaschii (strain ATCC 43067 / DSM 2661 / JAL-1 / JCM 10045 / NBRC 100440) (Methanococcus jannaschii).